A 142-amino-acid polypeptide reads, in one-letter code: HTH-type transcriptional regulator LysM (142 aa).

The HTH asnC-type domain maps to 6-69 (IDESDLKILE…ELENEIRAIV (64 aa)). A DNA-binding region (H-T-H motif) is located at residues 25–44 (YTLIAKELKVSEAAIRKRIE).

As to quaternary structure, homotetramer.

The protein localises to the cytoplasm. The protein operates within amino-acid biosynthesis; L-lysine biosynthesis via AAA pathway [regulation]. In terms of biological role, in the absence or at low concentrations of lysine, activates the biosynthesis of this amino acid via the alpha-aminoadipate (AAA) pathway. The chain is HTH-type transcriptional regulator LysM (lysM) from Saccharolobus solfataricus (strain ATCC 35092 / DSM 1617 / JCM 11322 / P2) (Sulfolobus solfataricus).